Here is a 682-residue protein sequence, read N- to C-terminus: Methionine--tRNA ligase (682 aa).

The 'HIGH' region motif lies at 15 to 25 (PYANGAIHLGH). Residues C146, C149, C159, and C162 each contribute to the Zn(2+) site. The 'KMSKS' region motif lies at 331–335 (KMSKS). K334 lines the ATP pocket. A tRNA-binding domain is found at 580–682 (DFAKLDMRVA…SGVTAGMQVK (103 aa)).

Belongs to the class-I aminoacyl-tRNA synthetase family. MetG type 1 subfamily. In terms of assembly, homodimer. Zn(2+) is required as a cofactor.

The protein resides in the cytoplasm. The catalysed reaction is tRNA(Met) + L-methionine + ATP = L-methionyl-tRNA(Met) + AMP + diphosphate. In terms of biological role, is required not only for elongation of protein synthesis but also for the initiation of all mRNA translation through initiator tRNA(fMet) aminoacylation. This chain is Methionine--tRNA ligase, found in Haemophilus influenzae (strain ATCC 51907 / DSM 11121 / KW20 / Rd).